A 2313-amino-acid chain; its full sequence is Voltage-dependent R-type calcium channel subunit alpha-1E (2313 aa).

The disordered stretch occupies residues 1–38; that stretch reads MARFGEAVVARPGSGDGDSDQSRNRQGTPVPASGQAAA. Residues 1–89 are Cytoplasmic-facing; sequence MARFGEAVVA…KYAKKLIDWP (89 aa). Residues S14 and S19 each carry the phosphoserine modification. An I repeat occupies 76 to 354; it reads NIVRKYAKKL…LVLGVLSGEF (279 aa). A helical transmembrane segment spans residues 90-108; that stretch reads PFEYMILATIIANCIVLAL. The Extracellular portion of the chain corresponds to 109–127; the sequence is EQHLPEDDKTPMSRRLEKT. A helical membrane pass occupies residues 128 to 146; that stretch reads EPYFIGIFCFEAGIKIVAL. Topologically, residues 147-158 are cytoplasmic; sequence GFIFHKGSYLRN. A helical membrane pass occupies residues 159 to 173; sequence GWNVMDFIVVLSGIL. Over 174-185 the chain is Extracellular; that stretch reads ATAGTHFNTHVD. A helical membrane pass occupies residues 186–205; sequence LRTLRAVRVLRPLKLVSGIP. The Cytoplasmic segment spans residues 206–223; it reads SLQIVLKSIMKAMVPLLQ. The chain crosses the membrane as a helical span at residues 224 to 244; that stretch reads IGLLLFFAILMFAIIGLEFYS. Topologically, residues 245–326 are extracellular; that stretch reads GKLHRACFMN…NTNDALGATW (82 aa). N254 carries an N-linked (GlcNAc...) asparagine glycan. Residues 327-350 traverse the membrane as a helical segment; the sequence is NWLYFIPLIIIGSFFVLNLVLGVL. Topologically, residues 351 to 476 are cytoplasmic; sequence SGEFAKERER…ISIRHMVKSQ (126 aa). The tract at residues 374 to 391 is binding to the beta subunit; it reads QQIERELNGYRAWIDKAE. D426 serves as a coordination point for Ca(2+). S427 is subject to Phosphoserine. S428, E430, and C432 together coordinate Ca(2+). The residue at position 440 (T440) is a Phosphothreonine. The stretch at 462–706 is one II repeat; sequence ERLLRISIRH…VFLAIAVDNL (245 aa). The chain crosses the membrane as a helical span at residues 477–496; that stretch reads VFYWIVLSLVALNTACVAIV. Residues 497 to 509 are Extracellular-facing; sequence HHNQPQWLTHLLY. Residues 510-529 form a helical membrane-spanning segment; that stretch reads YAEFLFLGLFLLEMSLKMYG. Topologically, residues 530–538 are cytoplasmic; it reads MGPRLYFHS. A helical transmembrane segment spans residues 539 to 557; the sequence is SFNCFDFGVTVGSIFEVVW. Residues 558–567 lie on the Extracellular side of the membrane; the sequence is AIFRPGTSFG. A helical transmembrane segment spans residues 568–586; sequence ISVLRALRLLRIFKITKYW. Residues 587–605 lie on the Cytoplasmic side of the membrane; it reads ASLRNLVVSLMSSMKSIIS. A helical membrane pass occupies residues 606–625; the sequence is LLFLLFLFIVVFALLGMQLF. Topologically, residues 626–678 are extracellular; sequence GGRFNFNDGTPSANFDTFPAAIMTVFQILTGEDWNEVMYNGIRSQGGVSSGMW. The chain crosses the membrane as a helical span at residues 679 to 703; it reads SAIYFIVLTLFGNYTLLNVFLAIAV. Topologically, residues 704–1148 are cytoplasmic; that stretch reads DNLANAQELT…TNPIRRACHY (445 aa). The tract at residues 729-774 is disordered; that stretch reads LQKAKEVSPMSAPNMPSIERDRRRRHHMSMWEPRSSHLRERRRRHH. Phosphoserine is present on residues S736, S745, S793, S815, and S855. The interval 851–984 is disordered; the sequence is SRGGSLKGDG…EERAQDLRRT (134 aa). The span at 866-875 shows a compositional bias: polar residues; that stretch reads ALDNQRTPLS. Over residues 913–926 the composition is skewed to basic residues; the sequence is RHRQSQRRSRHRRV. A compositionally biased stretch (low complexity) spans 933–945; that stretch reads SSSASRSRSASQE. A Phosphoserine modification is found at S947. The span at 955–983 shows a compositional bias: basic and acidic residues; that stretch reads EGEKDHELRGNHGAKEPTIQEERAQDLRR. S1097 is subject to Phosphoserine. Positions 1103–1125 are disordered; that stretch reads EIREDEEEVEKKKQKKEKRETGK. The III repeat unit spans residues 1140–1426; sequence NPIRRACHYI…IFVALIIITF (287 aa). The chain crosses the membrane as a helical span at residues 1149-1165; it reads IVNLRYFEMCILLVIAA. Residues 1166–1189 are Extracellular-facing; that stretch reads SSIALAAEDPVLTNSERNKVLRYF. Residues 1190 to 1209 form a helical membrane-spanning segment; it reads DYVFTGVFTFEMVIKMIDQG. Topologically, residues 1210–1217 are cytoplasmic; it reads LILQDGSY. A helical membrane pass occupies residues 1218–1240; the sequence is FRDLWNILDFVVVVGALVAFALA. The Extracellular segment spans residues 1241–1254; the sequence is NALGTNKGRDIKTI. Residues 1255–1272 traverse the membrane as a helical segment; the sequence is KSLRVLRVLRPLKTIKRL. The Cytoplasmic portion of the chain corresponds to 1273-1291; sequence PKLKAVFDCVVTSLKNVFN. A helical transmembrane segment spans residues 1292–1311; that stretch reads ILIVYKLFMFIFAVIAVQLF. Residues 1312-1398 are Extracellular-facing; it reads KGKFFYCTDS…RGPSRSNRME (87 aa). The helical transmembrane segment at 1399 to 1422 threads the bilayer; that stretch reads MSIFYVVYFVVFPFFFVNIFVALI. The Cytoplasmic segment spans residues 1423–1479; that stretch reads IITFQEQGDKMMEECSLEKNERACIDFAISAKPLTRYMPQNRHTFQYRVWHFVVSPS. One copy of the IV repeat lies at 1463-1726; that stretch reads NRHTFQYRVW…LFVAVIMDNF (264 aa). Residues 1480–1498 traverse the membrane as a helical segment; it reads FEYTIMAMIALNTVVLMMK. At 1499-1513 the chain is on the extracellular side; the sequence is YYSAPCTYELALKYL. The chain crosses the membrane as a helical span at residues 1514 to 1533; sequence NIAFTMVFSLECVLKVIAFG. Topologically, residues 1534 to 1541 are cytoplasmic; that stretch reads FLNYFRDT. A helical transmembrane segment spans residues 1542–1560; it reads WNIFDFITVIGSITEIILT. Residues 1561 to 1571 are Extracellular-facing; that stretch reads DSKLVNTSGFN. 2 N-linked (GlcNAc...) asparagine glycosylation sites follow: N1566 and N1571. A helical transmembrane segment spans residues 1572 to 1590; the sequence is MSFLKLFRAARLIKLLRQG. The Cytoplasmic portion of the chain corresponds to 1591–1609; sequence YTIRILLWTFVQSFKALPY. A helical transmembrane segment spans residues 1610–1629; that stretch reads VCLLIAMLFFIYAIIGMQVF. Residues 1630–1698 lie on the Extracellular side of the membrane; sequence GNIKLDEESH…NENERCGTDL (69 aa). Residues 1699 to 1724 form a helical membrane-spanning segment; it reads AYVYFVSFIFFCSFLMLNLFVAVIMD. Residues 1725–2313 are Cytoplasmic-facing; the sequence is NFEYLTRDSS…LSDTEEDDKC (589 aa). Positions 1739–1774 constitute an EF-hand domain; sequence HHLDEFVRVWAEYDRAACGRIHYTEMYEMLTLMSPP. Ca(2+) is bound by residues D1752, R1758, and E1763. Disordered stretches follow at residues 1970 to 2170, 2206 to 2225, and 2263 to 2295; these read VSEL…RPLL, CLTESSNSPHPQQSQHASPQ, and SNTIGSAPPLRHSWQMPNGHYRRRRRGGPGPGM. Over residues 2012 to 2023 the composition is skewed to polar residues; it reads TDPSSMRRSFST. The span at 2055–2064 shows a compositional bias: low complexity; sequence HSSLRLSAHR. Basic and acidic residues predominate over residues 2065-2085; that stretch reads LNSDSGHKSDTHRSGGRERGR. Residues S2094 and S2113 each carry the phosphoserine modification. The span at 2101–2118 shows a compositional bias: basic and acidic residues; it reads NSEERGTQADWESPERRQ. A compositionally biased stretch (polar residues) spans 2129–2152; that stretch reads TPNRQGTGSLSESSIPSVSDTSTP. Positions 2210-2225 are enriched in low complexity; that stretch reads SSNSPHPQQSQHASPQ.

Belongs to the calcium channel alpha-1 subunit (TC 1.A.1.11) family. CACNA1E subfamily. Interacts with EFHC1. Voltage-dependent calcium channels are multisubunit complexes, consisting of alpha-1, alpha-2, beta and delta subunits in a 1:1:1:1 ratio. The channel activity is directed by the pore-forming and voltage-sensitive alpha-1 subunit. In many cases, this subunit is sufficient to generate voltage-sensitive calcium channel activity. The auxiliary subunits beta and alpha-2/delta linked by a disulfide bridge regulate the channel activity. In terms of tissue distribution, expressed in neuronal tissues and in kidney.

The protein resides in the membrane. The catalysed reaction is Ca(2+)(in) = Ca(2+)(out). Voltage-sensitive calcium channels (VSCC) mediate the entry of calcium ions into excitable cells. They are also involved in a variety of calcium-dependent processes, including muscle contraction, hormone or neurotransmitter release, gene expression, cell motility, cell division and cell death. The isoform alpha-1E gives rise to R-type calcium currents. R-type calcium channels belong to the 'high-voltage activated' (HVA) group and are blocked by nickel. They are however insensitive to dihydropyridines (DHP). Calcium channels containing alpha-1E subunit could be involved in the modulation of firing patterns of neurons which is important for information processing. Functionally, voltage-sensitive calcium channels (VSCC) mediate the entry of calcium ions into excitable cells. They are also involved in a variety of calcium-dependent processes, including muscle contraction, hormone or neurotransmitter release, gene expression, cell motility, cell division and cell death. The isoform alpha-1E gives rise to R-type calcium currents. The polypeptide is Voltage-dependent R-type calcium channel subunit alpha-1E (CACNA1E) (Homo sapiens (Human)).